The primary structure comprises 423 residues: Core protease OPG082 (423 aa).

Residues histidine 241, aspartate 248, and cysteine 328 contribute to the active site.

Belongs to the peptidase C57 family.

It is found in the virion. In terms of biological role, late protein responsible for processing most or all of the viral core and membrane proteins known to undergo morphogenesis-associated proteolysis. These proteolytic events are involved in the transformation of immature virions (IV) into mature virions (MV). Probably cleaves at least the OPG129, OPG136, OPG098, and OPG144 precursors preferentially at Ala-Gly-|-Ala motifs. Also seems to process Ala-Gly-|-Ser and Ala-Gly-|-Thr motifs. The chain is Core protease OPG082 (OPG083) from Homo sapiens (Human).